The primary structure comprises 345 residues: Phosphate import ATP-binding protein PstB 2 (345 aa).

Positions 1 to 57 are disordered; the sequence is MSDTPQSEPRRSDDRSGADDATAAAAGSTDAAAAAVSSKTGGIAGPPGGPGEVDGDE. Positions 8-18 are enriched in basic and acidic residues; sequence EPRRSDDRSGA. The segment covering 19–35 has biased composition (low complexity); it reads DDATAAAAGSTDAAAAA. Residues 42-52 are compositionally biased toward gly residues; that stretch reads GIAGPPGGPGE. In terms of domain architecture, ABC transporter spans 86-340; that stretch reads VSVSDLDTYY…PQSQRVEDYV (255 aa). 118-125 is an ATP binding site; the sequence is GPSGCGKS.

This sequence belongs to the ABC transporter superfamily. Phosphate importer (TC 3.A.1.7) family. As to quaternary structure, the complex is composed of two ATP-binding proteins (PstB), two transmembrane proteins (PstC and PstA) and a solute-binding protein (PstS).

Its subcellular location is the cell membrane. The enzyme catalyses phosphate(out) + ATP + H2O = ADP + 2 phosphate(in) + H(+). In terms of biological role, part of the ABC transporter complex PstSACB involved in phosphate import. Responsible for energy coupling to the transport system. In Halobacterium salinarum (strain ATCC 700922 / JCM 11081 / NRC-1) (Halobacterium halobium), this protein is Phosphate import ATP-binding protein PstB 2.